The following is a 207-amino-acid chain: dTTP/UTP pyrophosphatase (207 aa).

The active-site Proton acceptor is the Asp-79.

The protein belongs to the Maf family. YhdE subfamily. Requires a divalent metal cation as cofactor.

Its subcellular location is the cytoplasm. The enzyme catalyses dTTP + H2O = dTMP + diphosphate + H(+). It catalyses the reaction UTP + H2O = UMP + diphosphate + H(+). Its function is as follows. Nucleoside triphosphate pyrophosphatase that hydrolyzes dTTP and UTP. May have a dual role in cell division arrest and in preventing the incorporation of modified nucleotides into cellular nucleic acids. The chain is dTTP/UTP pyrophosphatase from Rhodopseudomonas palustris (strain HaA2).